We begin with the raw amino-acid sequence, 64 residues long: DNA-directed RNA polymerase subunit Rpo10 (64 aa).

Positions 7, 10, 45, and 46 each coordinate Zn(2+).

It belongs to the archaeal Rpo10/eukaryotic RPB10 RNA polymerase subunit family. Part of the RNA polymerase complex. Zn(2+) is required as a cofactor.

It is found in the cytoplasm. The enzyme catalyses RNA(n) + a ribonucleoside 5'-triphosphate = RNA(n+1) + diphosphate. Functionally, DNA-dependent RNA polymerase (RNAP) catalyzes the transcription of DNA into RNA using the four ribonucleoside triphosphates as substrates. The sequence is that of DNA-directed RNA polymerase subunit Rpo10 from Haloquadratum walsbyi (strain DSM 16790 / HBSQ001).